Here is a 331-residue protein sequence, read N- to C-terminus: Aspartate carbamoyltransferase catalytic subunit (331 aa).

Positions 76 and 77 each coordinate carbamoyl phosphate. K104 serves as a coordination point for L-aspartate. The carbamoyl phosphate site is built by R126, H154, and Q157. L-aspartate is bound by residues R187 and R246. Residues G287 and P288 each coordinate carbamoyl phosphate.

Belongs to the aspartate/ornithine carbamoyltransferase superfamily. ATCase family. In terms of assembly, heterododecamer (2C3:3R2) of six catalytic PyrB chains organized as two trimers (C3), and six regulatory PyrI chains organized as three dimers (R2).

The catalysed reaction is carbamoyl phosphate + L-aspartate = N-carbamoyl-L-aspartate + phosphate + H(+). The protein operates within pyrimidine metabolism; UMP biosynthesis via de novo pathway; (S)-dihydroorotate from bicarbonate: step 2/3. Functionally, catalyzes the condensation of carbamoyl phosphate and aspartate to form carbamoyl aspartate and inorganic phosphate, the committed step in the de novo pyrimidine nucleotide biosynthesis pathway. The polypeptide is Aspartate carbamoyltransferase catalytic subunit (Dehalococcoides mccartyi (strain CBDB1)).